The following is a 154-amino-acid chain: Methylglyoxal synthase (154 aa).

The 149-residue stretch at 6-154 (GALPSRKQIA…AYIAERTKKL (149 aa)) folds into the MGS-like domain. Residues His19, Lys23, 45 to 48 (TGTT), and 65 to 66 (SG) each bind substrate. The Proton donor/acceptor role is filled by Asp71. His98 contacts substrate.

This sequence belongs to the methylglyoxal synthase family.

It catalyses the reaction dihydroxyacetone phosphate = methylglyoxal + phosphate. Functionally, catalyzes the formation of methylglyoxal from dihydroxyacetone phosphate. This Saccharophagus degradans (strain 2-40 / ATCC 43961 / DSM 17024) protein is Methylglyoxal synthase.